Here is a 254-residue protein sequence, read N- to C-terminus: uncharacterized protein (254 aa).

Residues Val7 and Asn85 each coordinate NADP(+). Ser136 serves as the catalytic Proton donor. Tyr150, Lys154, Val181, and Thr183 together coordinate NADP(+). Residue Tyr150 is the Proton acceptor of the active site. Catalysis depends on Lys154, which acts as the Lowers pKa of active site Tyr.

Belongs to the short-chain dehydrogenases/reductases (SDR) family.

This is an uncharacterized protein from Saccharomyces cerevisiae (strain ATCC 204508 / S288c) (Baker's yeast).